A 556-amino-acid chain; its full sequence is Formate--tetrahydrofolate ligase 1 (556 aa).

65–72 (TPAGEGKS) lines the ATP pocket.

This sequence belongs to the formate--tetrahydrofolate ligase family.

The enzyme catalyses (6S)-5,6,7,8-tetrahydrofolate + formate + ATP = (6R)-10-formyltetrahydrofolate + ADP + phosphate. It functions in the pathway one-carbon metabolism; tetrahydrofolate interconversion. In Streptococcus pyogenes serotype M1, this protein is Formate--tetrahydrofolate ligase 1.